Consider the following 280-residue polypeptide: Transmembrane protein 119 (280 aa).

An N-terminal signal peptide occupies residues 1–20 (MVPWFLLSLLLLARPVPGVA). The Extracellular segment spans residues 21–91 (YSVSLPASFL…IMDFFRQYVM (71 aa)). S36 carries O-linked (Xyl...) (chondroitin sulfate) serine glycosylation. Residues 38-47 (EAEGSSASSP) are compositionally biased toward low complexity. The segment at 38 to 73 (EAEGSSASSPSLPPPGTPAFSPTPERPQPTALDGPV) is disordered. A helical membrane pass occupies residues 92–112 (LIAVVGSLTFLIMFIVCAALI). At 113–280 (TRQKHKATAY…CACNRVSPSV (168 aa)) the chain is on the cytoplasmic side. Disordered stretches follow at residues 133-162 (VDQRDRAGGPRTFSEVPDRAPDSRHEEGLD) and 181-280 (PARA…SPSV). Basic and acidic residues predominate over residues 148–162 (VPDRAPDSRHEEGLD). A Phosphoserine modification is found at S269.

As to quaternary structure, interacts with SMAD1, SMAD5 and RUNX2. In terms of tissue distribution, expressed in spermatocytes and spermatids in the developing testis (at protein level). Expressed in the brain, heart, lung, spleen, skeletal muscle, ovary, testis and epididymis. Predominantly expressed in osteoblasts.

It localises to the cell membrane. Its subcellular location is the cytoplasm. The protein resides in the endoplasmic reticulum membrane. The protein localises to the secreted. Functionally, plays an important role in bone formation and normal bone mineralization. Promotes the differentiation of myoblasts into osteoblasts. May induce the commitment and differentiation of myoblasts into osteoblasts through an enhancement of BMP2 production and interaction with the BMP-RUNX2 pathway. Up-regulates the expression of ATF4 which plays a central role in osteoblast differentiation. Essential for normal spermatogenesis and late testicular differentiation. The polypeptide is Transmembrane protein 119 (Tmem119) (Mus musculus (Mouse)).